The following is a 282-amino-acid chain: Acetyl-coenzyme A carboxylase carboxyl transferase subunit beta (282 aa).

Residues 29 to 282 (LWRTCPKCQR…LMKYGGKQND (254 aa)) form the CoA carboxyltransferase N-terminal domain. 4 residues coordinate Zn(2+): Cys33, Cys36, Cys51, and Cys54. A C4-type zinc finger spans residues 33–54 (CPKCQRTLFAAQMDEYATCPGC).

This sequence belongs to the AccD/PCCB family. Acetyl-CoA carboxylase is a heterohexamer composed of biotin carboxyl carrier protein (AccB), biotin carboxylase (AccC) and two subunits each of ACCase subunit alpha (AccA) and ACCase subunit beta (AccD). The cofactor is Zn(2+).

It localises to the cytoplasm. The enzyme catalyses N(6)-carboxybiotinyl-L-lysyl-[protein] + acetyl-CoA = N(6)-biotinyl-L-lysyl-[protein] + malonyl-CoA. The protein operates within lipid metabolism; malonyl-CoA biosynthesis; malonyl-CoA from acetyl-CoA: step 1/1. Its function is as follows. Component of the acetyl coenzyme A carboxylase (ACC) complex. Biotin carboxylase (BC) catalyzes the carboxylation of biotin on its carrier protein (BCCP) and then the CO(2) group is transferred by the transcarboxylase to acetyl-CoA to form malonyl-CoA. This Limosilactobacillus fermentum (strain NBRC 3956 / LMG 18251) (Lactobacillus fermentum) protein is Acetyl-coenzyme A carboxylase carboxyl transferase subunit beta.